Reading from the N-terminus, the 720-residue chain is Protein-glutamine gamma-glutamyltransferase 5 (720 aa).

N-acetylalanine is present on alanine 2. Catalysis depends on residues cysteine 278, histidine 337, and aspartate 360. 4 residues coordinate Ca(2+): asparagine 400, aspartate 402, glutamate 448, and glutamate 453. Residues histidine 470 to leucine 499 are disordered. Residues serine 481–threonine 496 are compositionally biased toward polar residues.

The protein belongs to the transglutaminase superfamily. Transglutaminase family. It depends on Ca(2+) as a cofactor. Expressed in foreskin keratinocytes.

Its subcellular location is the cytoplasm. The catalysed reaction is L-glutaminyl-[protein] + L-lysyl-[protein] = [protein]-L-lysyl-N(6)-5-L-glutamyl-[protein] + NH4(+). In terms of biological role, catalyzes the cross-linking of proteins and the conjugation of polyamines to proteins. Contributes to the formation of the cornified cell envelope of keratinocytes. The sequence is that of Protein-glutamine gamma-glutamyltransferase 5 (TGM5) from Homo sapiens (Human).